We begin with the raw amino-acid sequence, 342 residues long: S-adenosylmethionine:tRNA ribosyltransferase-isomerase (342 aa).

It belongs to the QueA family. Monomer.

The protein resides in the cytoplasm. The catalysed reaction is 7-aminomethyl-7-carbaguanosine(34) in tRNA + S-adenosyl-L-methionine = epoxyqueuosine(34) in tRNA + adenine + L-methionine + 2 H(+). It participates in tRNA modification; tRNA-queuosine biosynthesis. In terms of biological role, transfers and isomerizes the ribose moiety from AdoMet to the 7-aminomethyl group of 7-deazaguanine (preQ1-tRNA) to give epoxyqueuosine (oQ-tRNA). In Sulfurimonas denitrificans (strain ATCC 33889 / DSM 1251) (Thiomicrospira denitrificans (strain ATCC 33889 / DSM 1251)), this protein is S-adenosylmethionine:tRNA ribosyltransferase-isomerase.